The primary structure comprises 393 residues: Methylthioribose kinase (393 aa).

Residues N38, K53, and 107–109 (EDL) contribute to the ATP site. Substrate is bound at residue D225. An ATP-binding site is contributed by 242–244 (DPE). Residue R332 participates in substrate binding.

It belongs to the methylthioribose kinase family. As to quaternary structure, homodimer.

It carries out the reaction 5-(methylsulfanyl)-D-ribose + ATP = 5-(methylsulfanyl)-alpha-D-ribose 1-phosphate + ADP + H(+). The protein operates within amino-acid biosynthesis; L-methionine biosynthesis via salvage pathway; S-methyl-5-thio-alpha-D-ribose 1-phosphate from S-methyl-5'-thioadenosine (hydrolase route): step 2/2. Its function is as follows. Catalyzes the phosphorylation of methylthioribose into methylthioribose-1-phosphate. The protein is Methylthioribose kinase of Bacillus cereus (strain G9842).